The sequence spans 678 residues: ABC transporter G family member 13 (678 aa).

The region spanning 10–254 (VAWEDLTVVI…FGEAGFPCPS (245 aa)) is the ABC transporter domain. ATP is bound at residue 48–55 (GPSGSGKS). Positions 355 to 567 (KQLRILTQRS…ALQGAYKNEM (213 aa)) constitute an ABC transmembrane type-2 domain. Transmembrane regions (helical) follow at residues 374–394 (YYWM…SIFF), 409–429 (CGGF…QSFI), 446–466 (VAVY…LMCL), 490–510 (LDLI…ASVV), 513–533 (FLMG…SAGF), and 602–622 (LDLA…FAIL). Phosphoserine is present on S658.

Belongs to the ABC transporter superfamily. ABCG family. Eye pigment precursor importer (TC 3.A.1.204) subfamily.

Its subcellular location is the membrane. The chain is ABC transporter G family member 13 (ABCG13) from Arabidopsis thaliana (Mouse-ear cress).